Here is a 177-residue protein sequence, read N- to C-terminus: RNA pyrophosphohydrolase (177 aa).

One can recognise a Nudix hydrolase domain in the interval 6 to 149 (GYRPNVGIVI…KRDVYRRVMK (144 aa)). Positions 38–59 (GGINPGESAEQAMYRELFEEVG) match the Nudix box motif.

This sequence belongs to the Nudix hydrolase family. RppH subfamily. A divalent metal cation is required as a cofactor.

Its function is as follows. Accelerates the degradation of transcripts by removing pyrophosphate from the 5'-end of triphosphorylated RNA, leading to a more labile monophosphorylated state that can stimulate subsequent ribonuclease cleavage. This is RNA pyrophosphohydrolase from Pectobacterium carotovorum subsp. carotovorum (strain PC1).